The chain runs to 198 residues: MICOS complex subunit MIC26 (198 aa).

Residues 1–25 (MFKVIQRSVGPASLSLLTFKVYAAP) form the signal peptide. A helical transmembrane segment spans residues 108-128 (PGFFPRLGVIGFAGLIGLLLA). Residue Ser162 is glycosylated (O-linked (Xyl...) (chondroitin sulfate) serine).

This sequence belongs to the apolipoprotein O/MICOS complex subunit Mic27 family. Component of the mitochondrial contact site and cristae organizing system (MICOS) complex, composed of at least MICOS10/MIC10, CHCHD3/MIC19, CHCHD6/MIC25, APOOL/MIC27, IMMT/MIC60, APOO/MIC23/MIC26 and MICOS13/MIC13. This complex was also known under the names MINOS or MitOS complex. he MICOS complex associates with mitochondrial outer membrane proteins SAMM50, MTX1 and MTX2 (together described as components of the mitochondrial outer membrane sorting assembly machinery (SAM) complex) and DNAJC11, mitochondrial inner membrane protein TMEM11 and with HSPA9. The MICOS and SAM complexes together with DNAJC11 are part of a large protein complex spanning both membranes termed the mitochondrial intermembrane space bridging (MIB) complex. Interacts with IMMT/MIC60. Interacts with MICOS10/MIC10 and APOOL/MIC27. O-glycosylation; glycosaminoglycan of chondroitin-sulfate type. As to expression, expressed in all tissues examined. Up-regulated in diabetic heart.

Its subcellular location is the mitochondrion inner membrane. It is found in the secreted. The protein localises to the mitochondrion. It localises to the golgi apparatus membrane. The protein resides in the endoplasmic reticulum membrane. Functionally, component of the MICOS complex, a large protein complex of the mitochondrial inner membrane that plays crucial roles in the maintenance of crista junctions, inner membrane architecture, and formation of contact sites to the outer membrane. Plays a crucial role in crista junction formation and mitochondrial function. Can promote cardiac lipotoxicity by enhancing mitochondrial respiration and fatty acid metabolism in cardiac myoblasts. Promotes cholesterol efflux from macrophage cells. Detected in HDL, LDL and VLDL. Secreted by a microsomal triglyceride transfer protein (MTTP)-dependent mechanism, probably as a VLDL-associated protein that is subsequently transferred to HDL. The chain is MICOS complex subunit MIC26 (APOO) from Homo sapiens (Human).